Reading from the N-terminus, the 343-residue chain is tRNA-specific 2-thiouridylase MnmA 2 (343 aa).

ATP-binding positions include 7 to 14 and Leu33; that span reads GMSGGVDS. Catalysis depends on Cys91, which acts as the Nucleophile. Residues Cys91 and Cys189 are joined by a disulfide bond. An ATP-binding site is contributed by Gly115. Positions 139-141 are interaction with tRNA; it reads KDQ. Cys189 functions as the Cysteine persulfide intermediate in the catalytic mechanism.

The protein belongs to the MnmA/TRMU family.

It localises to the cytoplasm. It catalyses the reaction S-sulfanyl-L-cysteinyl-[protein] + uridine(34) in tRNA + AH2 + ATP = 2-thiouridine(34) in tRNA + L-cysteinyl-[protein] + A + AMP + diphosphate + H(+). Functionally, catalyzes the 2-thiolation of uridine at the wobble position (U34) of tRNA, leading to the formation of s(2)U34. This chain is tRNA-specific 2-thiouridylase MnmA 2, found in Fusobacterium nucleatum subsp. nucleatum (strain ATCC 25586 / DSM 15643 / BCRC 10681 / CIP 101130 / JCM 8532 / KCTC 2640 / LMG 13131 / VPI 4355).